A 262-amino-acid polypeptide reads, in one-letter code: Phosphoribosyl 1,2-cyclic phosphate 1,2-diphosphodiesterase (262 aa).

9 residues coordinate Mn(2+): His-6, His-8, Asp-13, His-38, Glu-63, His-76, His-193, Asp-245, and His-247.

It belongs to the PHP family. It depends on Mn(2+) as a cofactor.

The enzyme catalyses alpha-D-ribose 1,2-cyclic phosphate 5-phosphate + H2O = D-ribose 2,5-bisphosphate + H(+). It catalyses the reaction D-ribose 2,5-bisphosphate + H2O = D-ribose 5-phosphate + phosphate. Functionally, involved in degradation of methylphosphonate. Catalyzes the hydrolysis of the phosphate ester at carbon-1 of 5-phospho-D-ribose 1,2-cyclic phosphate to form ribose 2,5-bisphosphate. This intermediate is then hydrolyzed to ribose-5-phosphate and inorganic phosphate. The polypeptide is Phosphoribosyl 1,2-cyclic phosphate 1,2-diphosphodiesterase (Eggerthella lenta (strain ATCC 25559 / DSM 2243 / CCUG 17323 / JCM 9979 / KCTC 3265 / NCTC 11813 / VPI 0255 / 1899 B) (Eubacterium lentum)).